The chain runs to 138 residues: Ribosome-binding factor A (138 aa).

The interval 112 to 138 is disordered; the sequence is EARTQGQAPAADVEPAPGAAPDDEAEE. Low complexity predominate over residues 119-131; it reads APAADVEPAPGAA.

This sequence belongs to the RbfA family. Monomer. Binds 30S ribosomal subunits, but not 50S ribosomal subunits or 70S ribosomes.

It localises to the cytoplasm. One of several proteins that assist in the late maturation steps of the functional core of the 30S ribosomal subunit. Associates with free 30S ribosomal subunits (but not with 30S subunits that are part of 70S ribosomes or polysomes). Required for efficient processing of 16S rRNA. May interact with the 5'-terminal helix region of 16S rRNA. The protein is Ribosome-binding factor A of Anaeromyxobacter sp. (strain K).